We begin with the raw amino-acid sequence, 444 residues long: S-locus-specific glycoprotein (444 aa).

The first 28 residues, 1–28, serve as a signal peptide directing secretion; that stretch reads MRGVIPNYHHSYTLFFFVILVLFPHVFS. A Bulb-type lectin domain is found at 31-159; sequence TLSPNEALTI…KTNDLDRFMW (129 aa). N-linked (GlcNAc...) asparagine glycosylation is found at N43, N125, N243, and N396. The 82-residue stretch at 356–437 folds into the PAN domain; sequence CGEGDGFLRM…GGQDLYVKVA (82 aa). 2 disulfide bridges follow: C387–C412 and C395–C397.

In terms of tissue distribution, stigma.

Functionally, involved in sporophytic self-incompatibility system (the inability of flowering plants to achieve self-fertilization). This is S-locus-specific glycoprotein (SLSG) from Brassica oleracea var. alboglabra (Chinese kale).